The chain runs to 372 residues: Neuropeptide S receptor (372 aa).

Over 1-52 (MPANLTEGSFHANQTVPMLDSSPVACTEIVTFTEALEAEEWGSFYSSFKTEQ) the chain is Extracellular. N-linked (GlcNAc...) asparagine glycosylation is found at asparagine 4 and asparagine 13. The helical transmembrane segment at 53–73 (LITLWVLFVFTIVGNSVVLFS) threads the bilayer. Residues 74–82 (TWRRKRKSR) are Cytoplasmic-facing. The chain crosses the membrane as a helical span at residues 83–103 (MTFFVTQLAITDSFTGLINIL). Over 104 to 122 (TDIIWRFTGDFMAPDLVCR) the chain is Extracellular. A disulfide bridge connects residues cysteine 121 and cysteine 198. The helical transmembrane segment at 123-143 (IVRYLQVVLLYASTYVLVSLS) threads the bilayer. Residues 144-165 (IDRYHAIVYPMKFLQGAEKQAK) lie on the Cytoplasmic side of the membrane. The helical transmembrane segment at 166–186 (VLIGIAWSLSFLFSIPTLIIF) threads the bilayer. Topologically, residues 187-213 (GKRTLSNGEVQCWALWPDDSYWTPYMT) are extracellular. A helical transmembrane segment spans residues 214–234 (IVAFLVYFIPLTIISVIYGLV). At 235-276 (IRTIWIKSKAHETVISNCSDGELCCSYNRGLISKAKIKAIKY) the chain is on the cytoplasmic side. Residues 277–297 (SIVIILAFICCWSPYFLFDML) form a helical membrane-spanning segment. At 298–313 (DNFNLLPDTKERFYAS) the chain is on the extracellular side. A helical membrane pass occupies residues 314–334 (VIIQNLPALNSAINPLIYCIF). Residues 335-372 (SGSLCSPCKVQRSQDSRMTYRERSERHEMQILSKPEFI) are Cytoplasmic-facing.

Belongs to the G-protein coupled receptor 1 family. Vasopressin/oxytocin receptor subfamily.

It is found in the cell membrane. Its function is as follows. G-protein coupled receptor for neuropeptide S (NPS). Promotes mobilization of intracellular Ca(2+) stores. Inhibits cell growth in response to NPS binding. Involved in pathogenesis of asthma and other IgE-mediated diseases. The protein is Neuropeptide S receptor (Npsr1) of Rattus norvegicus (Rat).